The primary structure comprises 185 residues: Putative RNA (cytidine(34)-2'-O)-methyltransferase (185 aa).

Residues Ile80, Gly105, and Ile126 each contribute to the S-adenosyl-L-methionine site.

The protein belongs to the class IV-like SAM-binding methyltransferase superfamily. RNA methyltransferase TrmH family. TrmL subfamily.

The protein localises to the cytoplasm. The enzyme catalyses cytidine(34) in tRNA + S-adenosyl-L-methionine = 2'-O-methylcytidine(34) in tRNA + S-adenosyl-L-homocysteine + H(+). It carries out the reaction 5-carboxymethylaminomethyluridine(34) in tRNA(Leu) + S-adenosyl-L-methionine = 5-carboxymethylaminomethyl-2'-O-methyluridine(34) in tRNA(Leu) + S-adenosyl-L-homocysteine + H(+). Functionally, could methylate the ribose at the nucleotide 34 wobble position in tRNA. The chain is Putative RNA (cytidine(34)-2'-O)-methyltransferase from Lactobacillus gasseri (strain ATCC 33323 / DSM 20243 / BCRC 14619 / CIP 102991 / JCM 1131 / KCTC 3163 / NCIMB 11718 / NCTC 13722 / AM63).